Consider the following 101-residue polypeptide: UPF0213 protein lp_2058 (101 aa).

In terms of domain architecture, GIY-YIG spans 15-92; that stretch reads KKYYFYVLLC…KHQSRAAKLK (78 aa).

The protein belongs to the UPF0213 family.

In Lactiplantibacillus plantarum (strain ATCC BAA-793 / NCIMB 8826 / WCFS1) (Lactobacillus plantarum), this protein is UPF0213 protein lp_2058.